The chain runs to 151 residues: MQIILLEKVANLGNLGEVVRVRDGYARNFLIPQKKARRATDAALKEFEARRAELEKVQAEKLAAAQALAERLNGFQLKISQKAGVDGRLFGSVTNADVAEGLRKAGFEAVEKSQVRMPNGQIKAVGEYPVQAVLHADVVADVVVLVEGEMA.

This sequence belongs to the bacterial ribosomal protein bL9 family.

Its function is as follows. Binds to the 23S rRNA. The chain is Large ribosomal subunit protein bL9 from Bordetella bronchiseptica (strain ATCC BAA-588 / NCTC 13252 / RB50) (Alcaligenes bronchisepticus).